The chain runs to 178 residues: DELTA-miturgitoxin-Cp3a (178 aa).

Residues 1 to 18 form the signal peptide; the sequence is MKALYLLGLLAFLYSCSS. The propeptide occupies 19–46; the sequence is ENVYDLQPESSEEENPGTFLEAIQEQSR. The Processing quadruplet motif signature appears at 43 to 46; it reads EQSR. 8 disulfide bridges follow: C48–C63, C55–C72, C62–C86, C74–C84, C113–C128, C120–C137, C127–C155, and C139–C153.

It belongs to the spider toxin CSTX family. Double-CSTX subfamily. Cleavage of the propeptide depends on the processing quadruplet motif (XXXR, with at least one of X being E). Expressed by the venom gland.

Its subcellular location is the secreted. Functionally, spider venom toxin that exhibits cytolytic activity by forming an alpha-helix across the membrane. Lethal to insect larvae. This Cheiracanthium punctorium (Yellow sac spider) protein is DELTA-miturgitoxin-Cp3a.